The chain runs to 438 residues: 26S proteasome regulatory subunit 7 homolog (438 aa).

Positions 1 to 15 are enriched in basic and acidic residues; that stretch reads MPPKEDWEKYQKPVD. The tract at residues 1–31 is disordered; that stretch reads MPPKEDWEKYQKPVDTEEENDKNPPPLDEGD. Position 90 is a phosphoserine (serine 90). Residue 220-227 coordinates ATP; that stretch reads GPPGTGKT.

It belongs to the AAA ATPase family.

Its subcellular location is the cytoplasm. It is found in the nucleus. Its function is as follows. The 26S proteasome is involved in the ATP-dependent degradation of ubiquitinated proteins. The regulatory (or ATPase) complex confers ATP dependency and substrate specificity to the 26S complex. The sequence is that of 26S proteasome regulatory subunit 7 homolog (rpt1) from Schizosaccharomyces pombe (strain 972 / ATCC 24843) (Fission yeast).